Consider the following 588-residue polypeptide: Neuropeptide-like 1 (588 aa).

A propeptide spanning residues 1–179 (MQCIPKKTFM…DPEVLEYSPD (179 aa)) is cleaved from the precursor. Residues 115–143 (NGDLPITIQERESDNDDEEKRSASSSDNV) form a disordered region. A Threonine amide modification is found at Thr194. Residues Ser210, Ser227, and Ser244 each carry the serine amide modification. Tyr260 is subject to Tyrosine amide. Glu281 is subject to Glutamic acid 1-amide. A propeptide spanning residues 285–299 (SIASLARSGDWPSVA) is cleaved from the precursor. Tyr318 carries the post-translational modification Tyrosine amide. Residues 321–588 (SLSDDREAPS…SNSHIAPRSM (268 aa)) constitute a propeptide that is removed on maturation. A disordered region spans residues 342-382 (GNSEGKENEWQATPFTVSEDLDEGKAKNRSNRRIEASQTRH).

The protein localises to the secreted. This chain is Neuropeptide-like 1, found in Camponotus floridanus (Florida carpenter ant).